A 585-amino-acid chain; its full sequence is Pyruvate kinase (585 aa).

Arg32 is a substrate binding site. K(+) is bound by residues Asn34, Ser36, Asp66, and Thr67. 34 to 37 provides a ligand contact to ATP; the sequence is NFSH. ATP contacts are provided by Arg73 and Lys156. Mg(2+) is bound at residue Glu222. 3 residues coordinate substrate: Gly245, Asp246, and Thr278. Asp246 contacts Mg(2+).

Belongs to the pyruvate kinase family. The protein in the C-terminal section; belongs to the PEP-utilizing enzyme family. As to quaternary structure, homotetramer. Mg(2+) is required as a cofactor. The cofactor is K(+).

The enzyme catalyses pyruvate + ATP = phosphoenolpyruvate + ADP + H(+). The protein operates within carbohydrate degradation; glycolysis; pyruvate from D-glyceraldehyde 3-phosphate: step 5/5. The polypeptide is Pyruvate kinase (pyk) (Bacillus licheniformis).